The primary structure comprises 102 residues: Large ribosomal subunit protein bL28 (102 aa).

This sequence belongs to the bacterial ribosomal protein bL28 family.

The protein is Large ribosomal subunit protein bL28 of Bradyrhizobium diazoefficiens (strain JCM 10833 / BCRC 13528 / IAM 13628 / NBRC 14792 / USDA 110).